The chain runs to 310 residues: Tagatose-6-phosphate kinase (310 aa).

It belongs to the carbohydrate kinase PfkB family. LacC subfamily.

It catalyses the reaction D-tagatofuranose 6-phosphate + ATP = D-tagatofuranose 1,6-bisphosphate + ADP + H(+). It participates in carbohydrate metabolism; D-tagatose 6-phosphate degradation; D-glyceraldehyde 3-phosphate and glycerone phosphate from D-tagatose 6-phosphate: step 1/2. The sequence is that of Tagatose-6-phosphate kinase from Staphylococcus epidermidis (strain ATCC 12228 / FDA PCI 1200).